Here is a 601-residue protein sequence, read N- to C-terminus: MAGSDLLLAGVLFLFAAVIAVPLASRLGIGAVLGYLLAGIAIGPWGLGFISDVDEILHFSELGVVFLMFIIGLELNPAKLWRLRSSIFGVGAAQVMLSAAILGGLLMTTGFSWQAAVVGGIGLAMSSTAMALQLMREKGMSRSEAGQLGFSVLLFQDLAVIPALALVPLLAGSADEHVNWLTVGMKVLAFAGMLIGGRYLLRPVFRFIASSGVREVFTAATLLLVLGSALFMEALGLSMALGTFIAGVLLAESEYRHELEIAIDPFKGLLLGLFFISVGMALNLGVLYTHLLWVAVSVAVLVAVKMLVLYLLARLYGLRSSERMQFAGVLSQGGEFAFVLFSLPASQRLFLHDQMALLLVAVTLSMMTTPLLMKGIDKLLSRRLNPADDTGEAPWVEDDKPQVIIVGFGRFGQVIGRLLMANKMRITVLERDISAVNLMRNYGYKVYFGDATQLELLRSAGAEEAQSIVITCNEPEDTMRLVEMCQQHFPHLHILARARGRVEAHELLQAGVTQFSRETFSSALELGRKALITLGMHPHQAQRAQLHFRRLDMRMLRELMPVHTDTVQISRVREARRELEEIFQREMQKESRQLDGWDEFE.

The next 13 helical transmembrane spans lie at 4 to 24 (SDLL…VPLA), 29 to 49 (IGAV…GLGF), 55 to 75 (EILH…GLEL), 87 to 107 (IFGV…GLLM), 115 to 135 (AAVV…LQLM), 152 to 172 (VLLF…LLAG), 177 to 197 (HVNW…LIGG), 207 to 227 (FIAS…LVLG), 230 to 250 (LFME…GVLL), 268 to 288 (GLLL…GVLY), 291 to 311 (LLWV…VLYL), 326 to 346 (FAGV…LPAS), and 356 to 376 (ALLL…MKGI). In terms of domain architecture, RCK N-terminal spans 400 to 519 (KPQVIIVGFG…AGVTQFSRET (120 aa)).

Belongs to the monovalent cation:proton antiporter 2 (CPA2) transporter (TC 2.A.37) family. KefB subfamily. Interacts with the regulatory subunit KefG.

It localises to the cell inner membrane. Its function is as follows. Pore-forming subunit of a potassium efflux system that confers protection against electrophiles. Catalyzes K(+)/H(+) antiport. This chain is Glutathione-regulated potassium-efflux system protein KefB, found in Klebsiella pneumoniae subsp. pneumoniae (strain ATCC 700721 / MGH 78578).